The following is a 414-amino-acid chain: Adenylosuccinate synthetase (414 aa).

Residues 12–18 (GDEGKGK) and 40–42 (GHT) each bind GTP. Asp13 (proton acceptor) is an active-site residue. Residues Asp13 and Gly40 each contribute to the Mg(2+) site. IMP is bound by residues 13–16 (DEGK), 38–41 (NAGH), Thr124, Arg138, Gln216, Thr231, and Arg297. The active-site Proton donor is the His41. Residue 293-299 (STTGRPR) coordinates substrate. Residues Arg299, 325-327 (KLD), and 403-405 (STG) contribute to the GTP site.

This sequence belongs to the adenylosuccinate synthetase family. As to quaternary structure, homodimer. It depends on Mg(2+) as a cofactor.

The protein resides in the cytoplasm. It carries out the reaction IMP + L-aspartate + GTP = N(6)-(1,2-dicarboxyethyl)-AMP + GDP + phosphate + 2 H(+). It functions in the pathway purine metabolism; AMP biosynthesis via de novo pathway; AMP from IMP: step 1/2. In terms of biological role, plays an important role in the de novo pathway of purine nucleotide biosynthesis. Catalyzes the first committed step in the biosynthesis of AMP from IMP. In Hydrogenobaculum sp. (strain Y04AAS1), this protein is Adenylosuccinate synthetase.